Here is a 354-residue protein sequence, read N- to C-terminus: Neutral protease 2 homolog BCIN_12g06300 (354 aa).

The N-terminal stretch at 1–19 (MRSFSKILAVASLAAIANS) is a signal peptide. A propeptide spanning residues 20–179 (AVLKRDNNVL…PSSIDRRTVL (160 aa)) is cleaved from the precursor. 2 disulfide bridges follow: cysteine 183-cysteine 255 and cysteine 262-cysteine 280. Histidine 305 serves as a coordination point for Zn(2+). Residue glutamate 306 is part of the active site. 2 residues coordinate Zn(2+): histidine 309 and aspartate 320.

Belongs to the peptidase M35 family. Requires Zn(2+) as cofactor.

The protein resides in the secreted. The enzyme catalyses Preferential cleavage of bonds with hydrophobic residues in P1'. Also 3-Asn-|-Gln-4 and 8-Gly-|-Ser-9 bonds in insulin B chain.. Functionally, secreted metalloproteinase that allows assimilation of proteinaceous substrates. Shows high activities on basic nuclear substrates such as histone and protamine. The sequence is that of Neutral protease 2 homolog BCIN_12g06300 from Botryotinia fuckeliana (strain B05.10) (Noble rot fungus).